We begin with the raw amino-acid sequence, 86 residues long: Small ribosomal subunit protein bS20 (86 aa).

It belongs to the bacterial ribosomal protein bS20 family.

Functionally, binds directly to 16S ribosomal RNA. The polypeptide is Small ribosomal subunit protein bS20 (Mycolicibacterium vanbaalenii (strain DSM 7251 / JCM 13017 / BCRC 16820 / KCTC 9966 / NRRL B-24157 / PYR-1) (Mycobacterium vanbaalenii)).